Here is a 520-residue protein sequence, read N- to C-terminus: NADH-quinone oxidoreductase subunit N (520 aa).

Transmembrane regions (helical) follow at residues 13–33 (ALLPEMLLSGGAMLLLLASVW), 55–75 (FGVILCLVVGLAVVIAWGDGA), 87–107 (GFRWAVDLVILLGTALALMLL), 115–135 (AAFGPEVPSLMLLASTGMMVL), 141–161 (LMFVFLGVELMSLAVYVLAGV), 176–196 (FLLGAISSGFLLYGMALLFGA), 219–239 (FMSGVALLLVGLAFKVAAAPF), 250–270 (APLPVTAFMSATVKTAAFAVF), 285–305 (WHMGLWWLAAVTMVVGNVFAL), 313–333 (MLAYSSIAHAGYLLVSIIVGD), 339–359 (ALIFYVVSYTLATMGAFGVLI), 383–403 (WLAIAMTVFLLAFMGMPVLGG), 425–445 (ILAVVLVIASAVSAAYYLAVV), and 468–488 (SLIATAAVALLVFGLYPTPIM). The segment covering 494-508 (ATTTTSPTSNPAAPR) has biased composition (low complexity). The interval 494-520 (ATTTTSPTSNPAAPRGEVRLQTASVPR) is disordered.

Belongs to the complex I subunit 2 family. As to quaternary structure, NDH-1 is composed of 14 different subunits. Subunits NuoA, H, J, K, L, M, N constitute the membrane sector of the complex.

Its subcellular location is the cell inner membrane. The catalysed reaction is a quinone + NADH + 5 H(+)(in) = a quinol + NAD(+) + 4 H(+)(out). Functionally, NDH-1 shuttles electrons from NADH, via FMN and iron-sulfur (Fe-S) centers, to quinones in the respiratory chain. The immediate electron acceptor for the enzyme in this species is believed to be ubiquinone. Couples the redox reaction to proton translocation (for every two electrons transferred, four hydrogen ions are translocated across the cytoplasmic membrane), and thus conserves the redox energy in a proton gradient. This Gemmatimonas aurantiaca (strain DSM 14586 / JCM 11422 / NBRC 100505 / T-27) protein is NADH-quinone oxidoreductase subunit N.